The chain runs to 52 residues: Conotoxin Cal9.2d (52 aa).

Residues 1 to 6 (KRGVTL) constitute a propeptide that is removed on maturation. 3 disulfide bridges follow: Cys14/Cys31, Cys19/Cys41, and Cys21/Cys46.

In terms of tissue distribution, expressed by the venom duct.

It is found in the secreted. Probable neurotoxin with unknown target. Possibly targets ion channels. The sequence is that of Conotoxin Cal9.2d from Californiconus californicus (California cone).